Here is a 267-residue protein sequence, read N- to C-terminus: MKAAVLTLAVLFLTGSQARHFWQQDEPPQSPWDRVKDLATVYVDSVKDSGRDYVSQFESSALGKQLNLKLLDNWDSLTSTVNKLREDLGPVTQEFWDNLEKETGWLRQEMSKDLEEVKAKVQPYLDDFQKKWQEEVKLYSQKLEPLRTEFQEGALQKLQDLQEKLSPLAEQVRDRARAHVDTLRTQLAPYSDELRQRLATRLEVLKESGGASLAEYHAKASEHLSALGEKAKPALEDLRQGLLPVLESFKVSFLSALEEYAKKLSSQ.

Residues 1 to 18 (MKAAVLTLAVLFLTGSQA) form the signal peptide. Repeat copies occupy residues 68–89 (LKLL…EDLG) and 90–111 (PVTQ…QEMS). The interval 68-267 (LKLLDNWDSL…EEYAKKLSSQ (200 aa)) is 10 X approximate tandem repeats. M110 bears the Methionine sulfoxide mark. A 3; half-length repeat occupies 112 to 122 (KDLEEVKAKVQ). Tandem repeats lie at residues 123–144 (PYLD…QKLE), 145–166 (PLRT…EKLS), 167–188 (PLAE…TQLA), 189–210 (PYSD…ESGG), and 211–232 (ASLA…EKAK). The stretch at 233 to 243 (PALEDLRQGLL) is one 9; half-length repeat. Copy 10 of the repeat occupies 244 to 267 (PVLESFKVSFLSALEEYAKKLSSQ).

Belongs to the apolipoprotein A1/A4/E family. Homodimer. Interacts with APOA1BP and CLU. Component of a sperm activating protein complex (SPAP), consisting of APOA1, an immunoglobulin heavy chain, an immunoglobulin light chain and albumin. Interacts with NDRG1. Interacts with SCGB3A2. Interacts with NAXE and YJEFN3. Post-translationally, glycosylated. Palmitoylated. In terms of processing, phosphorylation sites are present in the extracellular medium.

Its subcellular location is the secreted. Its function is as follows. Participates in the reverse transport of cholesterol from tissues to the liver for excretion by promoting cholesterol efflux from tissues and by acting as a cofactor for the lecithin cholesterol acyltransferase (LCAT). As part of the SPAP complex, activates spermatozoa motility. This is Apolipoprotein A-I (APOA1) from Cebus imitator (Panamanian white-faced capuchin).